A 210-amino-acid chain; its full sequence is Probable membrane protein Rv1733c (210 aa).

2 helical membrane passes run 43 to 63 (AVVMLLAVTVSLLTIPFAAAA) and 165 to 185 (ALAALGLWLSVAAVAGALLAL).

The protein resides in the cell membrane. This Mycobacterium tuberculosis (strain ATCC 25618 / H37Rv) protein is Probable membrane protein Rv1733c.